Reading from the N-terminus, the 492-residue chain is Phosphatidylinositol-glycan biosynthesis class W protein (492 aa).

Transmembrane regions (helical) follow at residues 26–46 (FILT…ATFF), 59–79 (FILE…FTEL), 82–102 (FLIV…QKNV), 127–147 (YRAF…FQVF), and 156–176 (TYGI…GALV). Residues 185–216 (IEKQQKKKREEEEDDNDKINKTSSSSSSSSSA) form a disordered region. A glycan (N-linked (GlcNAc...) asparagine) is linked at asparagine 204. Residues 205-216 (KTSSSSSSSSSA) are compositionally biased toward low complexity. Residues 264 to 284 (YGLHWNFFFTLGFVSISLAFL) form a helical membrane-spanning segment. Asparagine 289 carries N-linked (GlcNAc...) asparagine glycosylation. The next 4 membrane-spanning stretches (helical) occupy residues 290 to 310 (ISAI…NSFG), 331 to 351 (ICSF…GTEL), 364 to 384 (FATK…LCEI), and 399 to 419 (VLAI…ITLI). N-linked (GlcNAc...) asparagine glycosylation occurs at asparagine 424. Transmembrane regions (helical) follow at residues 437 to 457 (LFIF…MKTI) and 464 to 484 (SMII…ILDY).

Belongs to the PIGW family.

The protein localises to the endoplasmic reticulum membrane. The protein operates within glycolipid biosynthesis; glycosylphosphatidylinositol-anchor biosynthesis. Its function is as follows. Probable acetyltransferase, which acetylates the inositol ring of phosphatidylinositol during biosynthesis of GPI-anchor. In Dictyostelium discoideum (Social amoeba), this protein is Phosphatidylinositol-glycan biosynthesis class W protein.